A 245-amino-acid chain; its full sequence is 1-(5-phosphoribosyl)-5-[(5-phosphoribosylamino)methylideneamino] imidazole-4-carboxamide isomerase (245 aa).

Residue Asp7 is the Proton acceptor of the active site. The active-site Proton donor is Asp129.

It belongs to the HisA/HisF family.

The protein resides in the cytoplasm. The catalysed reaction is 1-(5-phospho-beta-D-ribosyl)-5-[(5-phospho-beta-D-ribosylamino)methylideneamino]imidazole-4-carboxamide = 5-[(5-phospho-1-deoxy-D-ribulos-1-ylimino)methylamino]-1-(5-phospho-beta-D-ribosyl)imidazole-4-carboxamide. It participates in amino-acid biosynthesis; L-histidine biosynthesis; L-histidine from 5-phospho-alpha-D-ribose 1-diphosphate: step 4/9. The sequence is that of 1-(5-phosphoribosyl)-5-[(5-phosphoribosylamino)methylideneamino] imidazole-4-carboxamide isomerase from Idiomarina loihiensis (strain ATCC BAA-735 / DSM 15497 / L2-TR).